Here is a 383-residue protein sequence, read N- to C-terminus: Cytochrome b (383 aa).

4 helical membrane passes run 32–52 (VGSL…FLAM), 76–98 (WLMR…LHMG), 113–133 (VWSM…MGYC), and 179–199 (FFAL…MHFM). Heme b contacts are provided by H82 and H96. Heme b is bound by residues H183 and H197. A ubiquinone is bound at residue H202. Transmembrane regions (helical) follow at residues 225–245 (FVFK…LFVF), 289–309 (LGGV…PMTD), 321–341 (LSKL…NMGQ), and 348–368 (FIEL…MLVP).

This sequence belongs to the cytochrome b family. Fungal cytochrome b-c1 complex contains 10 subunits; 3 respiratory subunits, 2 core proteins and 5 low-molecular weight proteins. Cytochrome b-c1 complex is a homodimer. The cofactor is heme b.

The protein resides in the mitochondrion inner membrane. Functionally, component of the ubiquinol-cytochrome c reductase complex (complex III or cytochrome b-c1 complex) that is part of the mitochondrial respiratory chain. The b-c1 complex mediates electron transfer from ubiquinol to cytochrome c. Contributes to the generation of a proton gradient across the mitochondrial membrane that is then used for ATP synthesis. The sequence is that of Cytochrome b (COB) from Debaryomyces hansenii (strain ATCC 36239 / CBS 767 / BCRC 21394 / JCM 1990 / NBRC 0083 / IGC 2968) (Yeast).